A 356-amino-acid polypeptide reads, in one-letter code: tRNA N6-adenosine threonylcarbamoyltransferase (356 aa).

Positions 115 and 119 each coordinate Fe cation. Residues 138–142, Asp-171, Gly-184, and Asn-283 each bind substrate; that span reads LVSGG. A Fe cation-binding site is contributed by Asp-311.

It belongs to the KAE1 / TsaD family. It depends on Fe(2+) as a cofactor.

Its subcellular location is the cytoplasm. It catalyses the reaction L-threonylcarbamoyladenylate + adenosine(37) in tRNA = N(6)-L-threonylcarbamoyladenosine(37) in tRNA + AMP + H(+). In terms of biological role, required for the formation of a threonylcarbamoyl group on adenosine at position 37 (t(6)A37) in tRNAs that read codons beginning with adenine. Is involved in the transfer of the threonylcarbamoyl moiety of threonylcarbamoyl-AMP (TC-AMP) to the N6 group of A37, together with TsaE and TsaB. TsaD likely plays a direct catalytic role in this reaction. This Prochlorococcus marinus (strain NATL2A) protein is tRNA N6-adenosine threonylcarbamoyltransferase.